The following is a 154-amino-acid chain: Probable transcription factor At4g00232 (154 aa).

Residues 1–44 (MDKANTNRSKVCGGSGEAKLTGKKRKNVSAKQSKKDAKKENSQM) form a disordered region.

It belongs to the GeBP family.

The polypeptide is Probable transcription factor At4g00232 (Arabidopsis thaliana (Mouse-ear cress)).